A 64-amino-acid chain; its full sequence is MPKMKTDKGVQKRFKKTANGFKRKQAHLRHILTKKSTKRKRHLRAKCQVAKSDVPAIARQLPYA.

It belongs to the bacterial ribosomal protein bL35 family.

The sequence is that of Large ribosomal subunit protein bL35 from Shewanella halifaxensis (strain HAW-EB4).